Here is a 208-residue protein sequence, read N- to C-terminus: Putative 3-methyladenine DNA glycosylase (208 aa).

Belongs to the DNA glycosylase MPG family.

This Lactobacillus delbrueckii subsp. bulgaricus (strain ATCC BAA-365 / Lb-18) protein is Putative 3-methyladenine DNA glycosylase.